The following is a 100-amino-acid chain: MEYGSTKMEERLSRSPGGKLALWAFYTWCGYFVWAMARYIWVMSRIPDAPVSGFESDLGSTAGKWLGALVGFLFMALVGALLGSIAWYTRPRPARSRRYE.

Topologically, residues 1–16 (MEYGSTKMEERLSRSP) are cytoplasmic. The helical transmembrane segment at 17-37 (GGKLALWAFYTWCGYFVWAMA) threads the bilayer. Over 38–64 (RYIWVMSRIPDAPVSGFESDLGSTAGK) the chain is Periplasmic. Residues 65 to 85 (WLGALVGFLFMALVGALLGSI) form a helical membrane-spanning segment. Over 86–100 (AWYTRPRPARSRRYE) the chain is Cytoplasmic.

Belongs to the DrpB family. As to quaternary structure, bacterial adenylate cyclase hybrid (BACTH) studies show interaction of this protein with DamX, FtsI, FtsN, FtsQ, YmgF, DedD, FtsA and MalF, as well as weaker interactions with DedD, MalG and PBP2, but this assay often generates false positive results.

The protein localises to the cell inner membrane. Functionally, a non-essential division protein that localizes to the septal ring in low ionic strength medium. Localizes to the septal ring in about 30% of observed cells before cell constriction occurs; localization occurs in low ionic strength medium (0 NaCl) and requires FtsZ but not FtsEX. Overexpression partially restores correct FtsI localization to the division septum in an ftsEX deletion. Isolated as a multicopy suppressor of an ftsEX deletion mutant; it does not suppress other cell division defects (e.g. ftsA, ftsI, ftsQ or ftsZ). This is Cell division protein DrpB from Escherichia coli (strain K12).